The chain runs to 152 residues: Transcription elongation factor Spt5 (152 aa).

The 31-residue stretch at 99–129 (EGDLVEVISGPFRGMQAQVVRVESTKNEVVL) folds into the KOW domain.

It belongs to the archaeal Spt5 family. As to quaternary structure, heterodimer composed of Spt4 and Spt5. Interacts with RNA polymerase (RNAP).

Its function is as follows. Stimulates transcription elongation. The protein is Transcription elongation factor Spt5 of Sulfolobus acidocaldarius (strain ATCC 33909 / DSM 639 / JCM 8929 / NBRC 15157 / NCIMB 11770).